We begin with the raw amino-acid sequence, 313 residues long: Ornithine carbamoyltransferase (313 aa).

Residues 57-60 (STRT), arginine 108, and 135-138 (HPTQ) each bind carbamoyl phosphate. L-ornithine contacts are provided by residues asparagine 167, aspartate 231, and 235–236 (SM). Carbamoyl phosphate contacts are provided by residues 272 to 273 (CL) and arginine 300.

It belongs to the aspartate/ornithine carbamoyltransferase superfamily. OTCase family.

It localises to the cytoplasm. It carries out the reaction carbamoyl phosphate + L-ornithine = L-citrulline + phosphate + H(+). It functions in the pathway amino-acid biosynthesis; L-arginine biosynthesis; L-arginine from L-ornithine and carbamoyl phosphate: step 1/3. In terms of biological role, reversibly catalyzes the transfer of the carbamoyl group from carbamoyl phosphate (CP) to the N(epsilon) atom of ornithine (ORN) to produce L-citrulline. This chain is Ornithine carbamoyltransferase, found in Thermotoga petrophila (strain ATCC BAA-488 / DSM 13995 / JCM 10881 / RKU-1).